A 709-amino-acid chain; its full sequence is Phosphate acetyltransferase (709 aa).

The segment at 389-709 (EFCYRLKILS…TIALTSIQSL (321 aa)) is phosphate acetyltransferase.

In the N-terminal section; belongs to the CobB/CobQ family. The protein in the C-terminal section; belongs to the phosphate acetyltransferase and butyryltransferase family. Homohexamer.

It localises to the cytoplasm. The enzyme catalyses acetyl-CoA + phosphate = acetyl phosphate + CoA. The protein operates within metabolic intermediate biosynthesis; acetyl-CoA biosynthesis; acetyl-CoA from acetate: step 2/2. Its function is as follows. Involved in acetate metabolism. The protein is Phosphate acetyltransferase (pta) of Buchnera aphidicola subsp. Schizaphis graminum (strain Sg).